The following is an 86-amino-acid chain: Cell division topological specificity factor (86 aa).

Belongs to the MinE family.

Its function is as follows. Prevents the cell division inhibition by proteins MinC and MinD at internal division sites while permitting inhibition at polar sites. This ensures cell division at the proper site by restricting the formation of a division septum at the midpoint of the long axis of the cell. This is Cell division topological specificity factor from Rhizobium johnstonii (strain DSM 114642 / LMG 32736 / 3841) (Rhizobium leguminosarum bv. viciae).